The chain runs to 82 residues: Small ribosomal subunit protein bS16 (82 aa).

This sequence belongs to the bacterial ribosomal protein bS16 family.

This is Small ribosomal subunit protein bS16 from Haemophilus ducreyi (strain 35000HP / ATCC 700724).